A 581-amino-acid chain; its full sequence is Major facilitator superfamily multidrug transporter NAG4 (581 aa).

A compositionally biased stretch (polar residues) spans 1–14 (MSHATDSTLDNASV). Residues 1–43 (MSHATDSTLDNASVDSEKVRDFGDDLQNHPVQPTRSILSKIRS) are disordered. An N-linked (GlcNAc...) asparagine glycan is attached at asparagine 11. Positions 15–27 (DSEKVRDFGDDLQ) are enriched in basic and acidic residues. Asparagine 125 is a glycosylation site (N-linked (GlcNAc...) asparagine). A run of 12 helical transmembrane segments spans residues 132–152 (WLYT…SAIV), 169–189 (VIIL…PLVF), 199–219 (KPIY…CGAA), 230–250 (LIDG…LADI), 261–281 (AIFS…GGLL), 290–310 (WIYW…IAIV), 365–385 (IVFL…MFFF), 403–423 (GVMF…APFF), 447–467 (LIPM…FAWS), 471–491 (WVSW…FCCL), 510–530 (ALAA…LFTI), and 544–564 (LMAF…FFGA).

Belongs to the major facilitator superfamily. DHA1 family. Polyamines/proton antiporter (TC 2.A.1.2.16) subfamily.

Its subcellular location is the cell membrane. Its function is as follows. MFS transporter involved in N-acetylglucosamine (GlcNAc) uptake. Confers resistance to cycloheximide, 4-nitroquinoline-N-oxide, and 1,10-phenanthroline, and contributes to virulence. This Candida albicans (strain SC5314 / ATCC MYA-2876) (Yeast) protein is Major facilitator superfamily multidrug transporter NAG4.